The primary structure comprises 58 residues: Mesomartoxin (58 aa).

The N-terminal stretch at 1 to 29 (MMSRLSVFILIALVLSVIIDVLNNSKVEG) is a signal peptide. Intrachain disulfides connect Cys-31–Cys-49, Cys-35–Cys-54, and Cys-39–Cys-56.

Belongs to the short scorpion toxin superfamily. Potassium channel inhibitor family. Alpha-KTx 26 subfamily. In terms of tissue distribution, expressed by the venom gland.

The protein localises to the secreted. Recombinant toxin that reversibly blocks the voltage-gated potassium channels Shaker (IC(50)=0.054 nM), rKv1.2/KCNA2 (IC(50)=15.6 nM), and rKv1.3/KCNA3 (IC(50)=12.5 uM). The chain is Mesomartoxin from Olivierus martensii (Manchurian scorpion).